The chain runs to 330 residues: 2-methyl-6-phytyl-1,4-hydroquinone methyltransferase 1, chloroplastic (330 aa).

Residues 1–45 (MKEMVSSSTFRAPGGLGFLGPSKIGLIPLRNRSGVRSRVKYIAPK) constitute a chloroplast transit peptide. The Chloroplast intermembrane portion of the chain corresponds to 46 to 295 (CAVSSARPAS…DVEKPVNPFT (250 aa)). The segment at 107–116 (VVDVGGGTGF) is SAM motif I. Residues 152 to 165 (VNIIEGDAEDLPYP) form an SAM motif II region. The segment at 193–206 (RVLKLGGVACLIGP) is SAM motif III. A helical membrane pass occupies residues 296–316 (FIFRFVMGTICASYYVLVPIY). At 317–330 (MWMKDQIVPKDQPI) the chain is on the stromal side.

This sequence belongs to the class I-like SAM-binding methyltransferase superfamily. MPBQ/MBSQ MT family.

It is found in the plastid. Its subcellular location is the chloroplast inner membrane. It carries out the reaction 2-methyl-6-phytyl-1,4-benzene-1,4-diol + S-adenosyl-L-methionine = 2,3-dimethyl-6-phytylbenzene-1,4-diol + S-adenosyl-L-homocysteine + H(+). The catalysed reaction is 2-methyl-6-(all-trans-nonaprenyl)benzene-1,4-diol + S-adenosyl-L-methionine = plastoquinol-9 + S-adenosyl-L-homocysteine + H(+). It catalyses the reaction 6-geranylgeranyl-2-methylbenzene-1,4-diol + S-adenosyl-L-methionine = 6-geranylgeranyl-2,3-dimethylbenzene-1,4-diol + S-adenosyl-L-homocysteine + H(+). It functions in the pathway cofactor biosynthesis; tocopherol biosynthesis. Its function is as follows. Involved in a key methylation step in both tocopherols (vitamin E) and plastoquinone synthesis. Catalyzes the conversion of 2-methyl-6-phytyl-1,4-hydroquinone (MPBQ) to 2,3-dimethyl-6-phytyl-1,4-hydroquinone (DMPQ, a substrate for tocopherol cyclase), and 2-methyl-6-solanyl-1,4-benzoquinone (MSBQ) to plastoquinone. The chain is 2-methyl-6-phytyl-1,4-hydroquinone methyltransferase 1, chloroplastic (ARSM2) from Oryza sativa subsp. japonica (Rice).